Here is a 127-residue protein sequence, read N- to C-terminus: Modulator protein MzrA (127 aa).

At 1 to 9 (MQLPRVTLR) the chain is on the cytoplasmic side. Residues 10–32 (QMTWTTSAIVLLGITLLLWSAFR) traverse the membrane as a helical segment. At 33–127 (HQESTLAIRA…LLRDTSHRFG (95 aa)) the chain is on the periplasmic side.

Belongs to the MzrA family. Interacts with EnvZ.

The protein localises to the cell inner membrane. Functionally, modulates the activity of the EnvZ/OmpR two-component regulatory system, probably by directly modulating EnvZ enzymatic activity and increasing stability of phosphorylated OmpR. The polypeptide is Modulator protein MzrA (Escherichia fergusonii (strain ATCC 35469 / DSM 13698 / CCUG 18766 / IAM 14443 / JCM 21226 / LMG 7866 / NBRC 102419 / NCTC 12128 / CDC 0568-73)).